Here is a 73-residue protein sequence, read N- to C-terminus: MKADIHPVYEAIDATCSCGNVIKTRSTLAAPLSLDVCNECHPFYTGKQKTLDVGGRVDKFKSRFGAFGATKAK.

The Zn(2+) site is built by C16, C18, C37, and C40.

This sequence belongs to the bacterial ribosomal protein bL31 family. Type A subfamily. As to quaternary structure, part of the 50S ribosomal subunit. It depends on Zn(2+) as a cofactor.

In terms of biological role, binds the 23S rRNA. The sequence is that of Large ribosomal subunit protein bL31 from Pseudomonas savastanoi pv. phaseolicola (strain 1448A / Race 6) (Pseudomonas syringae pv. phaseolicola (strain 1448A / Race 6)).